The primary structure comprises 652 residues: Set1 complex component ash2 (652 aa).

A disordered region spans residues 1 to 32 (MLAHGSNDYGVSLKGNKTGSSPSKASSLNWNE). Polar residues predominate over residues 15-32 (GNKTGSSPSKASSLNWNE). The segment at 40-94 (NTYCYCGKDRNLRFPDLQCSVCLNMFHLSCLSPPCTSMMGFSTNYQFVCKHCTED) adopts a PHD-type zinc-finger fold. Residues C43, C45, C58, C61, H66, C69, C88, and C91 each coordinate Zn(2+). The segment at 234-270 (RLVETETPPPSSSKLKEDYKDSKREMKRSNTPWSNAS) is disordered. Residues 247–261 (KLKEDYKDSKREMKR) are compositionally biased toward basic and acidic residues. One can recognise a B30.2/SPRY domain in the interval 330–519 (EAAKDLPNVM…KHNRYIDLPY (190 aa)).

Belongs to the cclA family. As to quaternary structure, component of the Set1 complex composed of ash2, sdc1, set1, shg1, spp1, swd1, swd2 and swd3. Component of the Lid2 complex composed of ash2, jmj3, lid2, sdc1 and snt2.

The protein localises to the nucleus. Its function is as follows. Component of the COMPASS (Set1C) complex that specifically mono-, di- and trimethylates histone H3 to form H3K4me1/2/3, which subsequently plays a role in telomere length maintenance and transcription elongation regulation. Regulates MAPK pathway and sporulation through H3K4 methylation. This is Set1 complex component ash2 from Schizosaccharomyces pombe (strain 972 / ATCC 24843) (Fission yeast).